A 595-amino-acid chain; its full sequence is Thiol:disulfide interchange protein DsbD (595 aa).

A signal peptide spans 1-24 (MAQRFITLILLLCSVLLAPHSAQS). Cys134 and Cys140 are joined by a disulfide. Positions 166–186 (NSSATVNPPATTQPEGDATPV) are disordered. 9 helical membrane-spanning segments follow: residues 197 to 217 (ALLI…YPLI), 233 to 253 (ILIL…LLGL), 270 to 290 (YVLI…FGLY), 311 to 331 (GGSL…CSPC), 332 to 352 (TTAP…MLAG), 353 to 373 (GGTL…VTLF), 384 to 404 (WMQY…VFLL), 411 to 431 (VWGL…AFVL), and 435 to 455 (AHAG…LIVA). A disulfide bridge links Cys209 with Cys331. The Thioredoxin domain occupies 452 to 592 (LIVARPLQDW…FLQHLQNTPA (141 aa)). Residues Cys507 and Cys510 are joined by a disulfide bond.

This sequence belongs to the thioredoxin family. DsbD subfamily.

The protein resides in the cell inner membrane. It carries out the reaction [protein]-dithiol + NAD(+) = [protein]-disulfide + NADH + H(+). It catalyses the reaction [protein]-dithiol + NADP(+) = [protein]-disulfide + NADPH + H(+). Its function is as follows. Required to facilitate the formation of correct disulfide bonds in some periplasmic proteins and for the assembly of the periplasmic c-type cytochromes. Acts by transferring electrons from cytoplasmic thioredoxin to the periplasm. This transfer involves a cascade of disulfide bond formation and reduction steps. In Yersinia pestis bv. Antiqua (strain Nepal516), this protein is Thiol:disulfide interchange protein DsbD.